A 653-amino-acid polypeptide reads, in one-letter code: DNA ligase (653 aa).

Residues 32–36 and 80–81 each bind NAD(+); these read NFEYD and SL. Lys104 functions as the N6-AMP-lysine intermediate in the catalytic mechanism. Arg125, Glu159, and Lys297 together coordinate NAD(+). 4 residues coordinate Zn(2+): Cys386, Cys389, Cys406, and Cys411. The region spanning 571–653 is the BRCT domain; it reads GGSEKLKGLT…EEFIQLLNEA (83 aa).

It belongs to the NAD-dependent DNA ligase family. LigA subfamily. The cofactor is Mg(2+). It depends on Mn(2+) as a cofactor.

It catalyses the reaction NAD(+) + (deoxyribonucleotide)n-3'-hydroxyl + 5'-phospho-(deoxyribonucleotide)m = (deoxyribonucleotide)n+m + AMP + beta-nicotinamide D-nucleotide.. DNA ligase that catalyzes the formation of phosphodiester linkages between 5'-phosphoryl and 3'-hydroxyl groups in double-stranded DNA using NAD as a coenzyme and as the energy source for the reaction. It is essential for DNA replication and repair of damaged DNA. The protein is DNA ligase of Lachnoclostridium phytofermentans (strain ATCC 700394 / DSM 18823 / ISDg) (Clostridium phytofermentans).